A 767-amino-acid polypeptide reads, in one-letter code: E3 ubiquitin-protein ligase pub1 (767 aa).

The C2 domain occupies Met-1 to Arg-111. Positions Leu-138–Asp-158 are enriched in polar residues. 2 disordered regions span residues Leu-138–Asp-216 and Ser-252–Phe-306. Thr-156 carries the post-translational modification Phosphothreonine. A compositionally biased stretch (low complexity) spans Pro-159–Ala-176. At Ser-178 the chain carries Phosphoserine. Thr-180 is modified (phosphothreonine). Over residues Ala-184–Pro-194 the composition is skewed to low complexity. The region spanning Trp-211 to Pro-236 is the WW 1 domain. A compositionally biased stretch (polar residues) spans Asn-257–Gly-286. WW domains follow at residues Trp-294–Pro-319 and Trp-351–Pro-376. The HECT domain maps to Phe-463–Glu-767. The active-site Glycyl thioester intermediate is the Cys-735.

The protein localises to the membrane. The protein resides in the cytoplasm. The enzyme catalyses S-ubiquitinyl-[E2 ubiquitin-conjugating enzyme]-L-cysteine + [acceptor protein]-L-lysine = [E2 ubiquitin-conjugating enzyme]-L-cysteine + N(6)-ubiquitinyl-[acceptor protein]-L-lysine.. It participates in protein modification; protein ubiquitination. Its function is as follows. E3 ubiquitin-protein ligase which accepts ubiquitin from an E2 ubiquitin-conjugating enzyme in the form of a thioester and then directly transfers the ubiquitin to targeted substrates. Regulates ubiquitination of cdc25. The chain is E3 ubiquitin-protein ligase pub1 (pub1) from Schizosaccharomyces pombe (strain 972 / ATCC 24843) (Fission yeast).